A 445-amino-acid polypeptide reads, in one-letter code: Phosphoglucosamine mutase (445 aa).

Residue Ser102 is the Phosphoserine intermediate of the active site. Residues Ser102, Asp240, Asp242, and Asp244 each contribute to the Mg(2+) site. Position 102 is a phosphoserine (Ser102).

The protein belongs to the phosphohexose mutase family. Requires Mg(2+) as cofactor. Post-translationally, activated by phosphorylation.

The enzyme catalyses alpha-D-glucosamine 1-phosphate = D-glucosamine 6-phosphate. In terms of biological role, catalyzes the conversion of glucosamine-6-phosphate to glucosamine-1-phosphate. The sequence is that of Phosphoglucosamine mutase from Mycolicibacterium gilvum (strain PYR-GCK) (Mycobacterium gilvum (strain PYR-GCK)).